The chain runs to 369 residues: Peptide chain release factor 2 (369 aa).

Gln251 is subject to N5-methylglutamine.

Belongs to the prokaryotic/mitochondrial release factor family. In terms of processing, methylated by PrmC. Methylation increases the termination efficiency of RF2.

It localises to the cytoplasm. Functionally, peptide chain release factor 2 directs the termination of translation in response to the peptide chain termination codons UGA and UAA. The sequence is that of Peptide chain release factor 2 from Chlamydia trachomatis serovar A (strain ATCC VR-571B / DSM 19440 / HAR-13).